Consider the following 318-residue polypeptide: Ribose-phosphate pyrophosphokinase 2 (318 aa).

Arg-96–Asp-101 lines the ATP pocket. Positions 128, 130, 139, and 143 each coordinate Mg(2+). His-130 provides a ligand contact to ATP. The interval Lys-212–Gly-227 is binding of phosphoribosylpyrophosphate.

It belongs to the ribose-phosphate pyrophosphokinase family. As to quaternary structure, homodimer. The active form is probably a hexamer composed of 3 homodimers. It depends on Mg(2+) as a cofactor.

The catalysed reaction is D-ribose 5-phosphate + ATP = 5-phospho-alpha-D-ribose 1-diphosphate + AMP + H(+). Its pathway is metabolic intermediate biosynthesis; 5-phospho-alpha-D-ribose 1-diphosphate biosynthesis; 5-phospho-alpha-D-ribose 1-diphosphate from D-ribose 5-phosphate (route I): step 1/1. Activated by magnesium and inorganic phosphate. Its function is as follows. Catalyzes the synthesis of phosphoribosylpyrophosphate (PRPP) that is essential for nucleotide synthesis. In Rattus norvegicus (Rat), this protein is Ribose-phosphate pyrophosphokinase 2 (Prps2).